We begin with the raw amino-acid sequence, 207 residues long: Ribonuclease HII (207 aa).

The 188-residue stretch at 20–207 (QLFAGVDEVG…KPVKRVLGIE (188 aa)) folds into the RNase H type-2 domain. 3 residues coordinate a divalent metal cation: D26, E27, and D118.

The protein belongs to the RNase HII family. The cofactor is Mn(2+). Mg(2+) serves as cofactor.

It is found in the cytoplasm. The enzyme catalyses Endonucleolytic cleavage to 5'-phosphomonoester.. Endonuclease that specifically degrades the RNA of RNA-DNA hybrids. The polypeptide is Ribonuclease HII (Aliivibrio fischeri (strain ATCC 700601 / ES114) (Vibrio fischeri)).